The following is a 191-amino-acid chain: Pyridoxal 5'-phosphate synthase subunit PdxT (191 aa).

52–54 contacts L-glutamine; that stretch reads GES. Catalysis depends on Cys-81, which acts as the Nucleophile. L-glutamine contacts are provided by residues Arg-108 and 136–137; that span reads IR. Active-site charge relay system residues include His-172 and Glu-174.

This sequence belongs to the glutaminase PdxT/SNO family. In the presence of PdxS, forms a dodecamer of heterodimers. Only shows activity in the heterodimer.

The catalysed reaction is aldehydo-D-ribose 5-phosphate + D-glyceraldehyde 3-phosphate + L-glutamine = pyridoxal 5'-phosphate + L-glutamate + phosphate + 3 H2O + H(+). It carries out the reaction L-glutamine + H2O = L-glutamate + NH4(+). It functions in the pathway cofactor biosynthesis; pyridoxal 5'-phosphate biosynthesis. Functionally, catalyzes the hydrolysis of glutamine to glutamate and ammonia as part of the biosynthesis of pyridoxal 5'-phosphate. The resulting ammonia molecule is channeled to the active site of PdxS. The chain is Pyridoxal 5'-phosphate synthase subunit PdxT from Actinobacillus pleuropneumoniae serotype 7 (strain AP76).